The primary structure comprises 198 residues: Recombination protein RecR (198 aa).

The C4-type zinc finger occupies 57–72; the sequence is CSICGHITDQDPCYIC. The Toprim domain maps to 80 to 175; the sequence is SVICVVQDPK…KLSRIAHGLP (96 aa).

This sequence belongs to the RecR family.

Its function is as follows. May play a role in DNA repair. It seems to be involved in an RecBC-independent recombinational process of DNA repair. It may act with RecF and RecO. In Bacillus velezensis (strain DSM 23117 / BGSC 10A6 / LMG 26770 / FZB42) (Bacillus amyloliquefaciens subsp. plantarum), this protein is Recombination protein RecR.